The primary structure comprises 112 residues: uncharacterized protein (112 aa).

This is an uncharacterized protein from Sulfolobus islandicus filamentous virus (isolate Iceland/Hveragerdi) (SIFV).